The chain runs to 407 residues: MAAPQNYLAVIKVIGVGGGGVNAINRMIEVGLKGVEFIAINTDAQALLMSDADVKLDVGRELTRGLGAGANPAVGRKAAEDHREEIEEVLKGADMVFVTAGEGGGTGTGRAPVVANIARSLGALTIGVVTRPFTFEGRRRANQAEDGIAELREEVDTLIVIPNDRLLSISDRQVSVLDAFKSADQVLLSGVQGITDLITTPGLINLDFADVKSVMSEAGSALMGIGSARGDDRAVAAAEMAISSPLLEASIDGARGVLLSISGGSDLGLFEINEAAQLVSEAAHPEANIIFGAVIDDALGDEVRVTVIAAGFDGGQPPARRENVLGANSNKREEPAAPARSSAESTRPTGGLGSVPPREESPAPAEPAPATASGESSLGPVSPPHVPPARPYQDTQAEELDVPDFLK.

Residues 18–22 (GGGVN), 105–107 (GTG), Glu-136, Arg-140, and Asp-184 each bind GTP. A disordered region spans residues 312-407 (FDGGQPPARR…EELDVPDFLK (96 aa)). Low complexity-rich tracts occupy residues 336-348 (AAPA…STRP) and 368-377 (APATASGESS). The span at 381–390 (VSPPHVPPAR) shows a compositional bias: pro residues. A compositionally biased stretch (acidic residues) spans 396–407 (QAEELDVPDFLK).

The protein belongs to the FtsZ family. As to quaternary structure, homodimer. Polymerizes to form a dynamic ring structure in a strictly GTP-dependent manner. Interacts directly with several other division proteins.

The protein resides in the cytoplasm. Its function is as follows. Essential cell division protein that forms a contractile ring structure (Z ring) at the future cell division site. The regulation of the ring assembly controls the timing and the location of cell division. One of the functions of the FtsZ ring is to recruit other cell division proteins to the septum to produce a new cell wall between the dividing cells. Binds GTP and shows GTPase activity. The protein is Cell division protein FtsZ of Streptomyces griseus.